Reading from the N-terminus, the 379-residue chain is Homoserine O-succinyltransferase (379 aa).

The AB hydrolase-1 domain occupies 51 to 360; sequence NAVLICHALS…DAPQGHDAFL (310 aa). The Nucleophile role is filled by S157. Residue R227 coordinates substrate. Residues D323 and H356 contribute to the active site. D357 serves as a coordination point for substrate.

The protein belongs to the AB hydrolase superfamily. MetX family. As to quaternary structure, homodimer.

The protein localises to the cytoplasm. The catalysed reaction is L-homoserine + succinyl-CoA = O-succinyl-L-homoserine + CoA. It participates in amino-acid biosynthesis; L-methionine biosynthesis via de novo pathway; O-succinyl-L-homoserine from L-homoserine: step 1/1. Its function is as follows. Transfers a succinyl group from succinyl-CoA to L-homoserine, forming succinyl-L-homoserine. This Ectopseudomonas mendocina (strain ymp) (Pseudomonas mendocina) protein is Homoserine O-succinyltransferase.